The chain runs to 969 residues: MASNNVAQFAAELKMPAGVLLEQLQAAGVQKASEDDALSEADKARLLDHLRKSHGATDGDKRKITLTRKHTSEIKQSDATGKARTIQVEVRKKRTFVKRDDVSDVAEQGQAQVAEADDDAELKRREEEARREAALLEKQAQELRERQERLEREEAERRAREEAAEAERRRAEEEAAAKRAAAEAAAAQQAAQQAAAAQQAAAPADSAQDEARAAAERAAQREAAKKAEDAAREAAEKARAEQEEIRKRREAAEAEARAIREMMNTPRKAVVKAVEPPKPAEPAKPAEAKGTLHKPAKPEGAQARPAAKKPAAAPAATPAPAGAGDRNKKPGGGKGGWQDDAAKRRGIKTRGDSSGGVDRGWRGGPKGRGRHQDNASSFQAPTEPIVREVHVPETISVADLAHKMAIKASEVIKVMMKMGQMVTINQVLDQETAMIVVEELGHRALAAKLDDPEALLVEGETGSDAEQLPRPPVVTVMGHVDHGKTSLLDYIRRAKVAAGEAGGITQHIGAYHVETPRGVVTFLDTPGHEAFTAMRARGAKATDIVILVVAADDGVMPQTKEAISHAKAGGVPIVVAINKIDKPEANPDRVKQELVAEGVVPEEYGGDSPFVPVSAKTGAGIDDLLENVLLQAEVLELKAPVEAPAKGIVIEAKLDKGKGPVATMLVQSGTLSRGDIVLAGTAYGRVRAMLDENGKPTKEAGPSIPVEIQGLSEVPAAGEEVIVLPDERKAREIALFRQGKFRDVKLAKQQAAKLESMLEQMGEGEVQNLPLIIKADVQGSQEALVQSLLKLSTDEVRVQIVHSAVGGISESDVNLATASKAVIIGFNTRADAQARKLAEANGIDIRYYNIIYDAVDEVKAAMSGMLAPEKREVVTGMVEVRQVFKVPKVGTVAGCMVTDGIVKRSSSVRVLRNNVVIFTGELESLKRFKDDVKEVKQGFECGMSVKNFNDILEGDQFEVFEVTEVARTL.

The span at 49–63 (HLRKSHGATDGDKRK) shows a compositional bias: basic and acidic residues. Disordered regions lie at residues 49–85 (HLRKSHGATDGDKRKITLTRKHTSEIKQSDATGKART), 100–128 (DDVSDVAEQGQAQVAEADDDAELKRREEE), and 143–380 (LRER…SFQA). Positions 105–114 (VAEQGQAQVA) are enriched in low complexity. Over residues 143 to 181 (LRERQERLEREEAERRAREEAAEAERRRAEEEAAAKRAA) the composition is skewed to basic and acidic residues. Residues 182–206 (AEAAAAQQAAQQAAAAQQAAAPADS) are compositionally biased toward low complexity. Basic and acidic residues predominate over residues 209 to 260 (DEARAAAERAAQREAAKKAEDAAREAAEKARAEQEEIRKRREAAEAEARAIR). Residues 301–323 (AQARPAAKKPAAAPAATPAPAGA) show a composition bias toward low complexity. Residues 353 to 366 (SSGGVDRGWRGGPK) are compositionally biased toward gly residues. Residues 469–638 (PRPPVVTVMG…LLQAEVLELK (170 aa)) enclose the tr-type G domain. Residues 478 to 485 (GHVDHGKT) form a G1 region. GTP is bound at residue 478-485 (GHVDHGKT). Positions 503 to 507 (GITQH) are G2. The segment at 524 to 527 (DTPG) is G3. GTP is bound by residues 524–528 (DTPGH) and 578–581 (NKID). The interval 578–581 (NKID) is G4. A G5 region spans residues 614–616 (SAK).

This sequence belongs to the TRAFAC class translation factor GTPase superfamily. Classic translation factor GTPase family. IF-2 subfamily.

The protein resides in the cytoplasm. One of the essential components for the initiation of protein synthesis. Protects formylmethionyl-tRNA from spontaneous hydrolysis and promotes its binding to the 30S ribosomal subunits. Also involved in the hydrolysis of GTP during the formation of the 70S ribosomal complex. The sequence is that of Translation initiation factor IF-2 from Burkholderia multivorans (strain ATCC 17616 / 249).